The primary structure comprises 262 residues: Type III pantothenate kinase (262 aa).

9 to 16 contacts ATP; sequence DIGNTNIV. Residues Y103 and 110–113 each bind substrate; that span reads GVDR. D112 functions as the Proton acceptor in the catalytic mechanism. Residue D132 coordinates K(+). T135 lines the ATP pocket. T187 is a binding site for substrate.

This sequence belongs to the type III pantothenate kinase family. In terms of assembly, homodimer. The cofactor is NH4(+). K(+) serves as cofactor.

It is found in the cytoplasm. The catalysed reaction is (R)-pantothenate + ATP = (R)-4'-phosphopantothenate + ADP + H(+). It participates in cofactor biosynthesis; coenzyme A biosynthesis; CoA from (R)-pantothenate: step 1/5. In terms of biological role, catalyzes the phosphorylation of pantothenate (Pan), the first step in CoA biosynthesis. This is Type III pantothenate kinase from Finegoldia magna (strain ATCC 29328 / DSM 20472 / WAL 2508) (Peptostreptococcus magnus).